The primary structure comprises 532 residues: Flavin-containing monooxygenase 3 (532 aa).

FAD is bound by residues 9-13, Glu-32, 40-41, and 61-62; these read GAGVS, LW, and NS. NADP(+) is bound by residues 60 to 61 and 195 to 198; these read TN and SGCD. Ser-401 bears the Phosphoserine mark. The helical transmembrane segment at 512–532 threads the bilayer; the sequence is CHLVKLFVLPVLFIAVFLALI.

It belongs to the FMO family. It depends on FAD as a cofactor.

It is found in the microsome membrane. It localises to the endoplasmic reticulum membrane. It carries out the reaction trimethylamine + NADPH + O2 = trimethylamine N-oxide + NADP(+) + H2O. The catalysed reaction is N,N-dimethylaniline + NADPH + O2 + H(+) = N,N-dimethylaniline N-oxide + NADP(+) + H2O. It catalyses the reaction hypotaurine + NADPH + O2 + H(+) = taurine + NADP(+) + H2O. The enzyme catalyses (S)-nicotine + NADPH + O2 = trans-(S)-nicotine N(1')-oxide + NADP(+) + H2O. It carries out the reaction albendazole + NADPH + O2 + H(+) = albendazole S-oxide + NADP(+) + H2O. Functionally, essential hepatic enzyme that catalyzes the oxygenation of a wide variety of nitrogen- and sulfur-containing compounds including drugs as well as dietary compounds. Plays an important role in the metabolism of trimethylamine (TMA), via the production of trimethylamine N-oxide (TMAO) metabolite. TMA is generated by the action of gut microbiota using dietary precursors such as choline, choline containing compounds, betaine or L-carnitine. By regulating TMAO concentration, FMO3 directly impacts both platelet responsiveness and rate of thrombus formation. This Canis lupus familiaris (Dog) protein is Flavin-containing monooxygenase 3 (FMO3).